A 142-amino-acid chain; its full sequence is Interleukin-3 (142 aa).

The N-terminal stretch at 1–18 (MSHLPILLLLLLVSPGLQ) is a signal peptide. A glycan (N-linked (GlcNAc...) asparagine) is linked at Asn-33. A disulfide bond links Cys-34 and Cys-102.

The protein belongs to the IL-3 family. In terms of assembly, monomer. As to expression, activated T-cells, mast cells, natural killer cells.

The protein resides in the secreted. Granulocyte/macrophage colony-stimulating factors are cytokines that act in hematopoiesis by controlling the production, differentiation, and function of 2 related white cell populations of the blood, the granulocytes and the monocytes-macrophages. Functionally, this CSF induces granulocytes, macrophages, mast cells, stem cells, erythroid cells, eosinophils and megakaryocytes. In Callithrix jacchus (White-tufted-ear marmoset), this protein is Interleukin-3 (IL3).